The primary structure comprises 290 residues: 4-diphosphocytidyl-2-C-methyl-D-erythritol kinase (290 aa).

K13 is a catalytic residue. 93 to 103 is a binding site for ATP; that stretch reads PVQAGLGGGSA. Residue D135 is part of the active site.

It belongs to the GHMP kinase family. IspE subfamily.

It carries out the reaction 4-CDP-2-C-methyl-D-erythritol + ATP = 4-CDP-2-C-methyl-D-erythritol 2-phosphate + ADP + H(+). It functions in the pathway isoprenoid biosynthesis; isopentenyl diphosphate biosynthesis via DXP pathway; isopentenyl diphosphate from 1-deoxy-D-xylulose 5-phosphate: step 3/6. Its function is as follows. Catalyzes the phosphorylation of the position 2 hydroxy group of 4-diphosphocytidyl-2C-methyl-D-erythritol. The chain is 4-diphosphocytidyl-2-C-methyl-D-erythritol kinase from Desulfitobacterium hafniense (strain Y51).